The following is a 393-amino-acid chain: Chorismate synthase (393 aa).

Residues Arg-40 and Arg-46 each coordinate NADP(+). FMN-binding positions include 129-131 (RSS), 249-250 (QA), Gly-301, 316-320 (KPIPT), and Arg-342.

It belongs to the chorismate synthase family. As to quaternary structure, homotetramer. Requires FMNH2 as cofactor.

The catalysed reaction is 5-O-(1-carboxyvinyl)-3-phosphoshikimate = chorismate + phosphate. It functions in the pathway metabolic intermediate biosynthesis; chorismate biosynthesis; chorismate from D-erythrose 4-phosphate and phosphoenolpyruvate: step 7/7. Functionally, catalyzes the anti-1,4-elimination of the C-3 phosphate and the C-6 proR hydrogen from 5-enolpyruvylshikimate-3-phosphate (EPSP) to yield chorismate, which is the branch point compound that serves as the starting substrate for the three terminal pathways of aromatic amino acid biosynthesis. This reaction introduces a second double bond into the aromatic ring system. This is Chorismate synthase from Pelobacter propionicus (strain DSM 2379 / NBRC 103807 / OttBd1).